A 31-amino-acid chain; its full sequence is Cytochrome b6-f complex subunit 6 (31 aa).

A helical membrane pass occupies residues 4-24 (LTSYFGFLLAALTITSVLFIG).

The protein belongs to the PetL family. As to quaternary structure, the 4 large subunits of the cytochrome b6-f complex are cytochrome b6, subunit IV (17 kDa polypeptide, PetD), cytochrome f and the Rieske protein, while the 4 small subunits are PetG, PetL, PetM and PetN. The complex functions as a dimer.

It localises to the plastid. Its subcellular location is the chloroplast thylakoid membrane. Functionally, component of the cytochrome b6-f complex, which mediates electron transfer between photosystem II (PSII) and photosystem I (PSI), cyclic electron flow around PSI, and state transitions. PetL is important for photoautotrophic growth as well as for electron transfer efficiency and stability of the cytochrome b6-f complex. The protein is Cytochrome b6-f complex subunit 6 of Silene conica (Striped corn catchfly).